The chain runs to 173 residues: Lipoprotein signal peptidase (173 aa).

Helical transmembrane passes span 11-31 (FGLIFAAVAFLLDQVTKWIVT), 69-89 (TTRWTLVAVTGIVAAAVAFWM), and 93-113 (QAKGDVIALALILGGALGNIV). Residues D123 and D142 contribute to the active site. The helical transmembrane segment at 134–154 (PFMIFNVADACITIGVLLLVA) threads the bilayer.

It belongs to the peptidase A8 family.

The protein resides in the cell inner membrane. The catalysed reaction is Release of signal peptides from bacterial membrane prolipoproteins. Hydrolyzes -Xaa-Yaa-Zaa-|-(S,diacylglyceryl)Cys-, in which Xaa is hydrophobic (preferably Leu), and Yaa (Ala or Ser) and Zaa (Gly or Ala) have small, neutral side chains.. It functions in the pathway protein modification; lipoprotein biosynthesis (signal peptide cleavage). In terms of biological role, this protein specifically catalyzes the removal of signal peptides from prolipoproteins. In Sphingopyxis alaskensis (strain DSM 13593 / LMG 18877 / RB2256) (Sphingomonas alaskensis), this protein is Lipoprotein signal peptidase.